Consider the following 677-residue polypeptide: WD and tetratricopeptide repeats protein 1 (677 aa).

WD repeat units lie at residues 45-84, 88-129, 132-172, 182-222, and 265-305; these read GHSG…KLLS, GHTA…TIHM, DHTN…KHSE, GQLV…NHRK, and RLRV…RPYT. At serine 353 the chain carries Phosphoserine. TPR repeat units lie at residues 362–395 and 397–432; these read LERV…APHN and MLYG…NPCH. The tract at residues 487-509 is disordered; that stretch reads NDGEEKKGPGGGAPVRLRSTSRK. The residue at position 511 (serine 511) is a Phosphoserine. WD repeat units follow at residues 535 to 575 and 578 to 617; these read NTTT…LVRV and GDES…EDLT. The tract at residues 655–677 is disordered; that stretch reads SSGGAGASDDEDSSEGQVQCRPS.

The protein operates within protein modification; protein ubiquitination. May function as a substrate receptor for CUL4-DDB1 E3 ubiquitin-protein ligase complex. The chain is WD and tetratricopeptide repeats protein 1 (WDTC1) from Homo sapiens (Human).